Reading from the N-terminus, the 368-residue chain is MAEKDNIIELRGVTKNFEDTCALDNIDLEIRNGEFLTLLGPSGCGKTTILRLISGFEKPDAGVITLKGQRMDDAPPEARQVNTVFQNYALFPHMSVRENVGFGLRMQRRPKDEIARRVHDALRMVHLEAHADRRPRQLSGGQQQRVAIARAVVNNPLVLLLDEPFSALDYKLRKQMQLEIKHLQRQLGITFVFVTHDQEEAFAMSDRVVVMNDGKIEQIGSPQEIYEEPANLYVARFVGEINILNAVIAANHGDGLYDAVIEGVTFPIRSQRTFAPGDKVNVLLRPEDLRVYTLTEDRPAGPHLTGRIEESVYKGATVDLIVTLSDGRRLMAAEFFNEDDVDINYNPGETVTVSWVDGWEVVLPDGEA.

An ABC transporter domain is found at Ile8–Val238. Gly40–Thr47 is an ATP binding site.

The protein belongs to the ABC transporter superfamily. Spermidine/putrescine importer (TC 3.A.1.11.1) family. As to quaternary structure, the complex is composed of two ATP-binding proteins (PotA), two transmembrane proteins (PotB and PotC) and a solute-binding protein (PotD).

The protein resides in the cell inner membrane. The enzyme catalyses ATP + H2O + polyamine-[polyamine-binding protein]Side 1 = ADP + phosphate + polyamineSide 2 + [polyamine-binding protein]Side 1.. Functionally, part of the ABC transporter complex PotABCD involved in spermidine/putrescine import. Responsible for energy coupling to the transport system. This Nitratidesulfovibrio vulgaris (strain ATCC 29579 / DSM 644 / CCUG 34227 / NCIMB 8303 / VKM B-1760 / Hildenborough) (Desulfovibrio vulgaris) protein is Spermidine/putrescine import ATP-binding protein PotA.